Reading from the N-terminus, the 185-residue chain is Lysozyme g (185 aa).

A Pyrrolidone carboxylic acid modification is found at Gln1. Intrachain disulfides connect Cys4-Cys60 and Cys18-Cys29. Active-site residues include Glu73 and Asp86.

Belongs to the glycosyl hydrolase 23 family.

The protein localises to the secreted. It carries out the reaction Hydrolysis of (1-&gt;4)-beta-linkages between N-acetylmuramic acid and N-acetyl-D-glucosamine residues in a peptidoglycan and between N-acetyl-D-glucosamine residues in chitodextrins.. The chain is Lysozyme g from Casuarius casuarius (Southern cassowary).